The sequence spans 307 residues: Ribosomal RNA small subunit methyltransferase H (307 aa).

S-adenosyl-L-methionine contacts are provided by residues 33–35 (GGY), D51, F78, D96, and Q103.

It belongs to the methyltransferase superfamily. RsmH family.

Its subcellular location is the cytoplasm. It catalyses the reaction cytidine(1402) in 16S rRNA + S-adenosyl-L-methionine = N(4)-methylcytidine(1402) in 16S rRNA + S-adenosyl-L-homocysteine + H(+). In terms of biological role, specifically methylates the N4 position of cytidine in position 1402 (C1402) of 16S rRNA. This chain is Ribosomal RNA small subunit methyltransferase H, found in Rickettsia conorii (strain ATCC VR-613 / Malish 7).